The primary structure comprises 1673 residues: Leucine-rich repeat- and IQ domain-containing protein 1 (1673 aa).

2 disordered regions span residues 22–48 (ISISSLENDEVENDSVSDTQSDSSDTD) and 189–208 (LEEKDKETLEAQNEREKRTF). An LRR 1 repeat occupies 34–59 (NDSVSDTQSDSSDTDLLELPESVLHY). One copy of the LRR 2 repeat lies at 216 to 239 (QCWMRQFEVEKKHLEDLQKQDQDK). The 30-residue stretch at 291 to 320 (RYDAAVKIQATYRASVTYRKYSPIIKEQME) folds into the IQ 1 domain. Positions 324 to 374 (RRAQELKEKEAKIRQKEEEKRRRLEEEQRVEEEKKKKMLEERRRREREYEE) are disordered. The span at 326-374 (AQELKEKEAKIRQKEEEKRRRLEEEQRVEEEKKKKMLEERRRREREYEE) shows a compositional bias: basic and acidic residues. The stretch at 491–516 (LPKLKINENLSKNQCSEQPSDQEFNA) is one LRR 3 repeat. 2 disordered regions span residues 544–658 (ESDT…EEIP) and 679–702 (EGEADLQDSASGKLAPSEEAGSHS). Basic and acidic residues-rich tracts occupy residues 549–567 (TEEHVEHVREEKVGQETEK) and 588–602 (EETREGLAEEIEIKE). Residues 603-629 (MTQQGGPSDENNSSPISMQKSLPSLTP) show a composition bias toward polar residues. The LRR 4 repeat unit spans residues 641-665 (LEEDQETDLKSERIEEIPEEGVLSC). Residues 647–656 (TDLKSERIEE) are compositionally biased toward basic and acidic residues. LRR repeat units follow at residues 830–852 (CSNLQILSLRRCGLTSLQGLSHC), 853–873 (TRLKYIDAQENHIEAISCENL), 874–894 (ENLSVVLLNNNLLTSIHGFDG), 895–919 (CTNLQSLELSHNKITRISGLESLKY), 921–939 (QELTVDHNQLISTKGLCEA), 940–961 (PTIVYLDCSHNHLTGIDGIGNC), 962–983 (GLLQIIKLQGNYLREPPSLRNH), 984–1005 (VLLRELHLDDNSISSVEGLSSC), 1007–1029 (LPLLQYLSISQNSLATIVPLFHL), 1030–1054 (VSLEKLDVSNNCLSDLTNVMCWFNA), and 1067–1090 (PVLQEINWRDSILKTLPALRVLNG). 2 disordered regions span residues 1163–1230 (AHEQ…HCEE) and 1308–1330 (PTTTEPLQDPLINNQTTSNEERR). Polar residues-rich tracts occupy residues 1168–1226 (DVNT…PSTS) and 1308–1325 (PTTTEPLQDPLINNQTTS). 2 consecutive IQ domains span residues 1280-1309 (PTKAAMVIQAQWRSYIAHRQINCSAEMHPT) and 1340-1369 (REKAALHIQAVWKGFILRKKLATARKAIKD). An LRR 16 repeat occupies 1378–1405 (EIDLEDFEFDEDALEKDWPALDSTGFPS).

The protein is Leucine-rich repeat- and IQ domain-containing protein 1 (Lrriq1) of Mus musculus (Mouse).